The sequence spans 351 residues: UDP-3-O-acylglucosamine N-acyltransferase (351 aa).

The Proton acceptor role is filled by histidine 240.

The protein belongs to the transferase hexapeptide repeat family. LpxD subfamily. In terms of assembly, homotrimer.

The enzyme catalyses a UDP-3-O-[(3R)-3-hydroxyacyl]-alpha-D-glucosamine + a (3R)-hydroxyacyl-[ACP] = a UDP-2-N,3-O-bis[(3R)-3-hydroxyacyl]-alpha-D-glucosamine + holo-[ACP] + H(+). It functions in the pathway bacterial outer membrane biogenesis; LPS lipid A biosynthesis. Functionally, catalyzes the N-acylation of UDP-3-O-acylglucosamine using 3-hydroxyacyl-ACP as the acyl donor. Is involved in the biosynthesis of lipid A, a phosphorylated glycolipid that anchors the lipopolysaccharide to the outer membrane of the cell. In Pseudomonas putida (strain ATCC 700007 / DSM 6899 / JCM 31910 / BCRC 17059 / LMG 24140 / F1), this protein is UDP-3-O-acylglucosamine N-acyltransferase.